The chain runs to 343 residues: Dual-specificity RNA methyltransferase RlmN (343 aa).

The Proton acceptor role is filled by E92. The Radical SAM core domain maps to 98-325 (DEDRTTLCIS…VITRSSRGSD (228 aa)). C105 and C330 are disulfide-bonded. [4Fe-4S] cluster contacts are provided by C112, C116, and C119. S-adenosyl-L-methionine contacts are provided by residues 157 to 158 (GE), S189, 211 to 213 (SLN), and N287. C330 serves as the catalytic S-methylcysteine intermediate.

It belongs to the radical SAM superfamily. RlmN family. [4Fe-4S] cluster serves as cofactor.

The protein localises to the cytoplasm. The catalysed reaction is adenosine(2503) in 23S rRNA + 2 reduced [2Fe-2S]-[ferredoxin] + 2 S-adenosyl-L-methionine = 2-methyladenosine(2503) in 23S rRNA + 5'-deoxyadenosine + L-methionine + 2 oxidized [2Fe-2S]-[ferredoxin] + S-adenosyl-L-homocysteine. It carries out the reaction adenosine(37) in tRNA + 2 reduced [2Fe-2S]-[ferredoxin] + 2 S-adenosyl-L-methionine = 2-methyladenosine(37) in tRNA + 5'-deoxyadenosine + L-methionine + 2 oxidized [2Fe-2S]-[ferredoxin] + S-adenosyl-L-homocysteine. In terms of biological role, specifically methylates position 2 of adenine 2503 in 23S rRNA and position 2 of adenine 37 in tRNAs. m2A2503 modification seems to play a crucial role in the proofreading step occurring at the peptidyl transferase center and thus would serve to optimize ribosomal fidelity. The polypeptide is Dual-specificity RNA methyltransferase RlmN (Geotalea uraniireducens (strain Rf4) (Geobacter uraniireducens)).